We begin with the raw amino-acid sequence, 512 residues long: Glutathione-binding protein GsiB (512 aa).

An N-terminal signal peptide occupies residues methionine 1–alanine 26.

Belongs to the bacterial solute-binding protein 5 family. In terms of assembly, the complex is composed of two ATP-binding proteins (GsiA), two transmembrane proteins (GsiC and GsiD) and a solute-binding protein (GsiB).

It is found in the periplasm. Part of the ABC transporter complex GsiABCD involved in glutathione import. Binds glutathione. This chain is Glutathione-binding protein GsiB, found in Shigella flexneri.